Here is a 330-residue protein sequence, read N- to C-terminus: Aspartate--ammonia ligase (330 aa).

It belongs to the class-II aminoacyl-tRNA synthetase family. AsnA subfamily.

Its subcellular location is the cytoplasm. It catalyses the reaction L-aspartate + NH4(+) + ATP = L-asparagine + AMP + diphosphate + H(+). Its pathway is amino-acid biosynthesis; L-asparagine biosynthesis; L-asparagine from L-aspartate (ammonia route): step 1/1. This Salmonella newport (strain SL254) protein is Aspartate--ammonia ligase.